The sequence spans 515 residues: Glucose-6-phosphate 1-dehydrogenase 6, cytoplasmic (515 aa).

Residues 38 to 45, Arg73, Tyr155, and Lys182 each bind NADP(+); that span reads GASGDLAK. D-glucose 6-phosphate-binding positions include Lys182, 212 to 216, Glu250, and Asp269; that span reads HYLGK. His274 functions as the Proton acceptor in the catalytic mechanism. Lys357 is an NADP(+) binding site. Residues Lys360 and Arg365 each contribute to the D-glucose 6-phosphate site. NADP(+) contacts are provided by Lys366, Arg370, and Arg394. Gln396 contacts D-glucose 6-phosphate. NADP(+)-binding positions include 402 to 404, 422 to 424, Arg488, and Trp510; these read YMK and DLS.

Belongs to the glucose-6-phosphate dehydrogenase family. Forms homodimer. Expressed in roots, leaves, stems, buds, flowers and siliques.

The protein localises to the cytoplasm. Its subcellular location is the cytosol. It carries out the reaction D-glucose 6-phosphate + NADP(+) = 6-phospho-D-glucono-1,5-lactone + NADPH + H(+). It participates in carbohydrate degradation; pentose phosphate pathway; D-ribulose 5-phosphate from D-glucose 6-phosphate (oxidative stage): step 1/3. Regulated by metabolites. Catalyzes the rate-limiting step of the oxidative pentose-phosphate pathway, which represents a route for the dissimilation of carbohydrates besides glycolysis. The main function of this enzyme is to provide reducing power (NADPH) and pentose phosphates for fatty acid and nucleic acid synthesis which are involved in membrane synthesis and cell division. This chain is Glucose-6-phosphate 1-dehydrogenase 6, cytoplasmic, found in Arabidopsis thaliana (Mouse-ear cress).